A 252-amino-acid chain; its full sequence is Adaptation to cold protein B (252 aa).

Interacts with AtcC, but not with AtcA and AtcJ. Interacts with the RNA polymerase subunits RpoB and RpoC.

Its function is as follows. Involved in cold adaptation. Directly interacts with the RNA polymerase and decreases its activity. May direct the DnaK chaperone to the RNA polymerase to sustain life at low temperatures. Overproduction prevents bacterial growth due to RNA polymerase inhibition. The protein is Adaptation to cold protein B of Shewanella oneidensis (strain ATCC 700550 / JCM 31522 / CIP 106686 / LMG 19005 / NCIMB 14063 / MR-1).